Reading from the N-terminus, the 184-residue chain is ATP synthase subunit delta (184 aa).

It belongs to the ATPase delta chain family. In terms of assembly, F-type ATPases have 2 components, F(1) - the catalytic core - and F(0) - the membrane proton channel. F(1) has five subunits: alpha(3), beta(3), gamma(1), delta(1), epsilon(1). F(0) has three main subunits: a(1), b(2) and c(10-14). The alpha and beta chains form an alternating ring which encloses part of the gamma chain. F(1) is attached to F(0) by a central stalk formed by the gamma and epsilon chains, while a peripheral stalk is formed by the delta and b chains.

Its subcellular location is the cell inner membrane. Its function is as follows. F(1)F(0) ATP synthase produces ATP from ADP in the presence of a proton or sodium gradient. F-type ATPases consist of two structural domains, F(1) containing the extramembraneous catalytic core and F(0) containing the membrane proton channel, linked together by a central stalk and a peripheral stalk. During catalysis, ATP synthesis in the catalytic domain of F(1) is coupled via a rotary mechanism of the central stalk subunits to proton translocation. Functionally, this protein is part of the stalk that links CF(0) to CF(1). It either transmits conformational changes from CF(0) to CF(1) or is implicated in proton conduction. This is ATP synthase subunit delta from Rickettsia canadensis (strain McKiel).